The primary structure comprises 388 residues: Sphingosine N-acyltransferase-like protein FUM17 (388 aa).

2 helical membrane passes run 60–80 (SWAL…IHPV) and 113–133 (LWDL…RKFI). A glycan (N-linked (GlcNAc...) asparagine) is linked at Asn-146. A TLC domain is found at 151–368 (GKQQRFMEQM…LLRNAYRLLF (218 aa)). The next 4 membrane-spanning stretches (helical) occupy residues 166 to 186 (FAVM…LWIF), 204 to 224 (IKFY…VLVL), 241 to 261 (IITI…IGIS), and 339 to 359 (FITF…LYCL).

It belongs to the sphingosine N-acyltransferase family.

It is found in the endoplasmic reticulum membrane. It functions in the pathway mycotoxin biosynthesis. Sphingosine N-acyltransferase-like protein; part of the gene cluster that mediates the biosynthesis of fumonisins B1 (FB1), B2 (FB2), B3 (FB3), and B4 (FB4), which are carcinogenic mycotoxins. May contribute to the biosynthesis of ceramide via interaction with Cer3. Does not confer resistance to FB1. The biosynthesis starts with the FUM1-catalyzed carbon chain assembly from one molecule of acetyl-CoA, eight molecules of malonyl-CoA, and two molecules of methionine (in S-adenosyl form). The C18 polyketide chain is released from the enzyme by a nucleophilic attack of a carbanion, which is derived from R-carbon of alanine by decarboxylation, on the carbonyl carbon of polyketide acyl chain. This step is catalyzed by the pyridoxal 5'-phosphate-dependent aminoacyl transferase FUM8. The resultant 3-keto intermediate is then stereospecifically reduced to a 3-hydroxyl product by reductase FUM13. Subsequent oxidations at C-10 by the cytochrome P450 monooxygenase FUM2, C-14 and C-15 by FUM6, FUM12 or FUM15, tricarballylic esterification of the hydroxyl groups on C-14 and C-15 by acyltransferase FUM14, and C-5 hydroxylation by 2-keto-glutarate-dependent dioxygenase FUM3 furnish the biosynthesis of fumonisins. The tricarballylic moieties are most likely derived from the citric acid cycle, and their addition to the carbon backbone may involve FUM7, FUM10, FUM11 and FUM14. The chain is Sphingosine N-acyltransferase-like protein FUM17 from Gibberella moniliformis (strain M3125 / FGSC 7600) (Maize ear and stalk rot fungus).